A 210-amino-acid polypeptide reads, in one-letter code: Dephospho-CoA kinase (210 aa).

The DPCK domain occupies 4–202 (WVGLTGGIGS…AFYSGIFASK (199 aa)). 12 to 17 (GSGKSA) serves as a coordination point for ATP.

The protein belongs to the CoaE family.

It localises to the cytoplasm. It catalyses the reaction 3'-dephospho-CoA + ATP = ADP + CoA + H(+). It functions in the pathway cofactor biosynthesis; coenzyme A biosynthesis; CoA from (R)-pantothenate: step 5/5. In terms of biological role, catalyzes the phosphorylation of the 3'-hydroxyl group of dephosphocoenzyme A to form coenzyme A. The protein is Dephospho-CoA kinase of Neisseria gonorrhoeae (strain ATCC 700825 / FA 1090).